Here is a 405-residue protein sequence, read N- to C-terminus: Phosphopentomutase (405 aa).

Residues aspartate 10, aspartate 303, histidine 308, aspartate 344, histidine 345, and histidine 356 each contribute to the Mn(2+) site.

This sequence belongs to the phosphopentomutase family. Requires Mn(2+) as cofactor.

It is found in the cytoplasm. The enzyme catalyses 2-deoxy-alpha-D-ribose 1-phosphate = 2-deoxy-D-ribose 5-phosphate. It catalyses the reaction alpha-D-ribose 1-phosphate = D-ribose 5-phosphate. It participates in carbohydrate degradation; 2-deoxy-D-ribose 1-phosphate degradation; D-glyceraldehyde 3-phosphate and acetaldehyde from 2-deoxy-alpha-D-ribose 1-phosphate: step 1/2. Its function is as follows. Isomerase that catalyzes the conversion of deoxy-ribose 1-phosphate (dRib-1-P) and ribose 1-phosphate (Rib-1-P) to deoxy-ribose 5-phosphate (dRib-5-P) and ribose 5-phosphate (Rib-5-P), respectively. This Shewanella woodyi (strain ATCC 51908 / MS32) protein is Phosphopentomutase.